The primary structure comprises 386 residues: Pepsin A (386 aa).

The signal sequence occupies residues 1-15; sequence MKWLLLLSLVALSEC. Residues 16–60 constitute a propeptide, activation peptide; the sequence is YIYKVPLVKKKSLRKNLMEQGLLQDYLKTHSINPASKYLKEAASM. Residues 74 to 383 enclose the Peptidase A1 domain; the sequence is YFGTIGIGTP…DRGNNQVGLA (310 aa). The active site involves Asp92. 2 disulfide bridges follow: Cys105/Cys110 and Cys266/Cys270. Residue Asp275 is part of the active site. An intrachain disulfide couples Cys309 to Cys342.

This sequence belongs to the peptidase A1 family.

It localises to the secreted. The enzyme catalyses Preferential cleavage: hydrophobic, preferably aromatic, residues in P1 and P1' positions. Cleaves 1-Phe-|-Val-2, 4-Gln-|-His-5, 13-Glu-|-Ala-14, 14-Ala-|-Leu-15, 15-Leu-|-Tyr-16, 16-Tyr-|-Leu-17, 23-Gly-|-Phe-24, 24-Phe-|-Phe-25 and 25-Phe-|-Tyr-26 bonds in the B chain of insulin.. In terms of biological role, shows particularly broad specificity; although bonds involving phenylalanine and leucine are preferred, many others are also cleaved to some extent. The chain is Pepsin A (PGA) from Rhinolophus ferrumequinum (Greater horseshoe bat).